A 464-amino-acid polypeptide reads, in one-letter code: MTEVKKGKINQILGPVVDVRFPSEWLPEINTALELNNHGSKLVLEVSQLVGDNIARCIAMDTTDGLVRGQEVINTQKPITMPVGKQVLGRMFNVTGDPIDEQPAPTGKRMPIHRPAPSFAEQAESIEILETGIKVVDLLVPFAKGGKIGLFGGAGVGKTVLMQELIHNIAKNHGGLSVFAGVGERTREGNDLYYEMAESDVLDKTALVFGQMNEPPGARMRVALSGLTMAEEFRDAFGQDVLLFIDNIFRFTQAGSEVSALLGRMPSAVGYQPTLAFEMGQLQERITSTKKGSITSVQAVYVPADDLTDPAPATTFSHLDAKVVLDRAIASLGLYPAISPLQSTSRLLDPLVVGVKHYSVARRVIEILQRFMELQDIIAILGMDELSEEDRQLVMRARKVRNYLSQPSHVAEKFSGQPGLSVKLEDTIEGFRKILDGECDDIHEQHFLYVGKIDDVFEKAAKNK.

An ATP-binding site is contributed by 152 to 159 (GGAGVGKT).

The protein belongs to the ATPase alpha/beta chains family. In terms of assembly, F-type ATPases have 2 components, CF(1) - the catalytic core - and CF(0) - the membrane proton channel. CF(1) has five subunits: alpha(3), beta(3), gamma(1), delta(1), epsilon(1). CF(0) has three main subunits: a(1), b(2) and c(9-12). The alpha and beta chains form an alternating ring which encloses part of the gamma chain. CF(1) is attached to CF(0) by a central stalk formed by the gamma and epsilon chains, while a peripheral stalk is formed by the delta and b chains.

Its subcellular location is the cell membrane. It carries out the reaction ATP + H2O + 4 H(+)(in) = ADP + phosphate + 5 H(+)(out). Produces ATP from ADP in the presence of a proton gradient across the membrane. The catalytic sites are hosted primarily by the beta subunits. The chain is ATP synthase subunit beta from Ureaplasma parvum serovar 3 (strain ATCC 27815 / 27 / NCTC 11736).